Consider the following 454-residue polypeptide: Transcription factor bHLH123 (454 aa).

Over residues serine 101–serine 113 the composition is skewed to low complexity. 4 disordered regions span residues serine 101–alanine 127, alanine 185–serine 228, alanine 270–glutamate 348, and glycine 398–glutamate 417. Composition is skewed to polar residues over residues alanine 185–glycine 195 and serine 207–serine 228. Residues glutamate 303–asparagine 324 show a composition bias toward basic and acidic residues. The region spanning lysine 334–leucine 383 is the bHLH domain.

In terms of assembly, homodimer.

Its subcellular location is the nucleus. The chain is Transcription factor bHLH123 (BHLH123) from Arabidopsis thaliana (Mouse-ear cress).